We begin with the raw amino-acid sequence, 788 residues long: MARKKRTMPAAEVYEKSDSFGQLPSAPPISPHRMDHIYPDSYGSPPPLHQAYHVQPARANYVPDQIARFNVIKPDRLAKRHNPQLYTKRGCTDVFCCFLFFVFLCGWVVVASLGIMWGDPQRLIYPTDSEFRRCGVDQGGYYNFRYLQFFQIFTNKDIFSKRPYLFYFDLTKCISYATALGGCQTTQICVEECPSQYFSYLQLRTASAAEIQNKMKNVVYCTDDVDKSTVTTFVALQSLVQRGKCVSYTVKSVPVLQRCFPEAIFNAVDNVNTVLNSSNSLDYLKRTFGDDALIPQDIQITGQSSEVMKSVVEDQPVTHKVIHDLSQTWWQTLILIFAAGMLSFIWTVIMRLLGSLLIWLSIFLVLGALGFGAGFSWIKWNNLKATGAIDDYSFHPAFDAYFEMPTTWFVVAIATSVLLVIFLLVILFIRQRISIACALISESSKAIGSMMSTLVFPLFPFLLHIGVFALWGSIAIWLASSGQEICRMKETNGQVYNTSTKCDCNAKLAGCTYVGIEKESDTIFWLQVYNLFAFFWLSCFVTALGDIALAGAFASYYWARDKRHDVPTFPVIRALNRAMRYNLGSIAFGSLIIAIVKIIRVMLEYIDHKLGKSENKAVKWFLMCLKCCFWCLEMFFKFLTKNAYIMIAIYGKNFFSSAKDSFLLITRNIVRTVVVHKVAGILLFLGKAMITLGMGILSFYYFSGRWVVEGVPKVDLYYYFVPIVIVVIGSYFMADLFFDVYEMAVDTTFICFLEDSEQNDGSLERPYFMSQKLLEILGTKNEIPLHTK.

The chain crosses the membrane as a helical span at residues 98–118 (FLFFVFLCGWVVVASLGIMWG). N276 carries N-linked (GlcNAc...) asparagine glycosylation. 4 helical membrane passes run 329–349 (WWQT…WTVI), 352–372 (LLGS…LGFG), 409–429 (FVVA…ILFI), and 458–478 (LFPF…AIWL). N497 carries N-linked (GlcNAc...) asparagine glycosylation. Transmembrane regions (helical) follow at residues 531–551 (LFAF…ALAG), 583–603 (LGSI…RVML), 620–640 (WFLM…KFLT), 679–699 (AGIL…ILSF), and 718–738 (YYFV…DLFF).

It belongs to the CTL (choline transporter-like) family.

The protein localises to the membrane. The chain is Choline transporter-like protein 1 (chtl-1) from Caenorhabditis briggsae.